The primary structure comprises 379 residues: Lipid-A-disaccharide synthase (379 aa).

Belongs to the LpxB family.

The catalysed reaction is a lipid X + a UDP-2-N,3-O-bis[(3R)-3-hydroxyacyl]-alpha-D-glucosamine = a lipid A disaccharide + UDP + H(+). Its pathway is bacterial outer membrane biogenesis; LPS lipid A biosynthesis. Functionally, condensation of UDP-2,3-diacylglucosamine and 2,3-diacylglucosamine-1-phosphate to form lipid A disaccharide, a precursor of lipid A, a phosphorylated glycolipid that anchors the lipopolysaccharide to the outer membrane of the cell. The protein is Lipid-A-disaccharide synthase of Idiomarina loihiensis (strain ATCC BAA-735 / DSM 15497 / L2-TR).